Here is a 218-residue protein sequence, read N- to C-terminus: Small ribosomal subunit protein uS4 (218 aa).

In terms of domain architecture, S4 RNA-binding spans 111 to 175 (RRLQTQVLRL…SPLKNESHPE (65 aa)). The segment at 192–218 (KAAAEAKQAREKPPERGGGRRKRGGRR) is disordered. The span at 198 to 209 (KQAREKPPERGG) shows a compositional bias: basic and acidic residues.

Belongs to the universal ribosomal protein uS4 family. Part of the 30S ribosomal subunit. Contacts protein S5. The interaction surface between S4 and S5 is involved in control of translational fidelity.

One of the primary rRNA binding proteins, it binds directly to 16S rRNA where it nucleates assembly of the body of the 30S subunit. In terms of biological role, with S5 and S12 plays an important role in translational accuracy. The polypeptide is Small ribosomal subunit protein uS4 (Methanosarcina acetivorans (strain ATCC 35395 / DSM 2834 / JCM 12185 / C2A)).